We begin with the raw amino-acid sequence, 882 residues long: Cadherin-1 (882 aa).

The N-terminal stretch at 1-23 (MGPWSRSLSALCCCCRCNPWLCR) is a signal peptide. Residues 24–154 (EPEPCIPGFG…PHHGLRRQKR (131 aa)) constitute a propeptide that is removed on maturation. The disordered stretch occupies residues 117–137 (EVSAHHHHHHSHHDSPSGTQT). Cadherin domains lie at 154 to 262 (RDWV…KPQF), 263 to 375 (TQEV…APRF), 376 to 486 (NPTT…APIF), 487 to 595 (VPPQ…GPVP), and 594 to 702 (VPEP…RPAE). Over 155–709 (DWVIPPISCP…PAEAGLQVPA (555 aa)) the chain is Extracellular. Serine 280 carries O-linked (Man...) serine glycosylation. 5 O-linked (Man...) threonine glycosylation sites follow: threonine 285, threonine 358, threonine 470, threonine 472, and threonine 509. A glycan (N-linked (GlcNAc...) asparagine) is linked at asparagine 558. 3 O-linked (Man...) threonine glycosylation sites follow: threonine 576, threonine 578, and threonine 580. The N-linked (GlcNAc...) asparagine glycan is linked to asparagine 637. Residues 710–730 (ILGILGGILAFLILILLLLLL) form a helical membrane-spanning segment. At 731 to 882 (VRRRRVVKEP…ADMYGGGEDD (152 aa)) the chain is on the cytoplasmic side. The tract at residues 747–767 (DTRDNVYYYDEEGGGEEDQDF) is disordered. Residues tyrosine 753, tyrosine 754, and tyrosine 755 each carry the phosphotyrosine; by SRC modification. Residues 755 to 767 (YDEEGGGEEDQDF) show a composition bias toward acidic residues. Residues 758–769 (EGGGEEDQDFDL) form a required for binding CTNND1 and PSEN1 region. 5 positions are modified to phosphoserine: serine 770, serine 793, serine 838, serine 840, and serine 846. The required for binding alpha, beta and gamma catenins stretch occupies residues 811–882 (IDENLKAADS…ADMYGGGEDD (72 aa)).

As to quaternary structure, homodimer; disulfide-linked. Component of an E-cadherin/ catenin adhesion complex composed of at least E-cadherin/CDH1, beta-catenin/CTNNB1 or gamma-catenin/JUP, and potentially alpha-catenin/CTNNA1; the complex is located to adherens junctions. Found in a complex composed of CDH1, RAP1A and PKP3; PKP3 acts as a scaffold protein within the complex, the complex is required for CDH1 localization to mature desmosome cell junctions. Interacts with the TRPV4 and CTNNB1 complex. Interacts with CTNND1. The stable association of CTNNA1 is controversial as CTNNA1 was shown not to bind to F-actin when assembled in the complex. Alternatively, the CTNNA1-containing complex may be linked to F-actin by other proteins such as LIMA1. Interaction with PSEN1, cleaves CDH1 resulting in the disassociation of cadherin-based adherens junctions (CAJs). Interacts with AJAP1 and DLGAP5. Interacts with TBC1D2. Interacts with CAV1. Interacts with PIP5K1C. Interacts with RAB8B. Interacts with DDR1; this stabilizes CDH1 at the cell surface and inhibits its internalization. Interacts with RAPGEF2. Interacts with KLRG1. Forms a ternary complex composed of ADAM10, CADH1 and EPHA4; within the complex, CADH1 is cleaved by ADAM10 which disrupts adherens junctions. Interacts with SPEF1. Interacts with CTNNB1 and PKP2. Interacts with AMOTL2; the interaction may facilitate binding of radial actin fibers to cell junction complexes. Interacts with DSG3; the interaction is required for CDH1 localization to developing adherens junctions. During apoptosis or with calcium influx, cleaved by a membrane-bound metalloproteinase (ADAM10), PS1/gamma-secretase and caspase-3. Processing by the metalloproteinase, induced by calcium influx, causes disruption of cell-cell adhesion and the subsequent release of beta-catenin into the cytoplasm. The residual membrane-tethered cleavage product is rapidly degraded via an intracellular proteolytic pathway. Cleavage by caspase-3 releases the cytoplasmic tail resulting in disintegration of the actin microfilament system. The gamma-secretase-mediated cleavage promotes disassembly of adherens junctions. During development of the cochlear organ of Corti, cleavage by ADAM10 at adherens junctions promotes pillar cell separation. In terms of processing, N-glycosylation at Asn-637 is essential for expression, folding and trafficking. Addition of bisecting N-acetylglucosamine by MGAT3 modulates its cell membrane location. Post-translationally, ubiquitinated by a SCF complex containing SKP2, which requires prior phosphorylation by CK1/CSNK1A1. Ubiquitinated by CBLL1/HAKAI, requires prior phosphorylation at Tyr-754. O-glycosylated. O-manosylated by TMTC1, TMTC2, TMTC3 or TMTC4. Thr-285 and Thr-509 are O-mannosylated by TMTC2 or TMTC4 but not TMTC1 or TMTC3.

The protein localises to the cell junction. It is found in the adherens junction. The protein resides in the cell membrane. It localises to the endosome. Its subcellular location is the golgi apparatus. The protein localises to the trans-Golgi network. It is found in the cytoplasm. The protein resides in the desmosome. Its function is as follows. Cadherins are calcium-dependent cell adhesion proteins. They preferentially interact with themselves in a homophilic manner in connecting cells; cadherins may thus contribute to the sorting of heterogeneous cell types. CDH1 is involved in mechanisms regulating cell-cell adhesions, mobility and proliferation of epithelial cells. Promotes organization of radial actin fiber structure and cellular response to contractile forces, via its interaction with AMOTL2 which facilitates anchoring of radial actin fibers to CDH1 junction complexes at the cell membrane. Plays a role in the early stages of desmosome cell-cell junction formation via facilitating the recruitment of DSG2 and DSP to desmosome plaques. Has a potent invasive suppressor role. It is a ligand for integrin alpha-E/beta-7. Functionally, E-Cad/CTF2 promotes non-amyloidogenic degradation of Abeta precursors. Has a strong inhibitory effect on APP C99 and C83 production. This is Cadherin-1 (CDH1) from Bos taurus (Bovine).